We begin with the raw amino-acid sequence, 341 residues long: Anthranilate phosphoribosyltransferase (341 aa).

5-phospho-alpha-D-ribose 1-diphosphate contacts are provided by residues Gly80, 83–84 (GD), Thr88, 90–93 (NIST), 108–116 (KHGNRAVSS), and Ser120. Gly80 is an anthranilate binding site. Ser92 is a binding site for Mg(2+). Asn111 provides a ligand contact to anthranilate. Anthranilate is bound at residue Arg166. Residues Asp225 and Glu226 each contribute to the Mg(2+) site.

It belongs to the anthranilate phosphoribosyltransferase family. Homodimer. Requires Mg(2+) as cofactor.

The catalysed reaction is N-(5-phospho-beta-D-ribosyl)anthranilate + diphosphate = 5-phospho-alpha-D-ribose 1-diphosphate + anthranilate. Its pathway is amino-acid biosynthesis; L-tryptophan biosynthesis; L-tryptophan from chorismate: step 2/5. Its function is as follows. Catalyzes the transfer of the phosphoribosyl group of 5-phosphorylribose-1-pyrophosphate (PRPP) to anthranilate to yield N-(5'-phosphoribosyl)-anthranilate (PRA). This is Anthranilate phosphoribosyltransferase from Brevibacillus brevis (strain 47 / JCM 6285 / NBRC 100599).